Consider the following 263-residue polypeptide: Acidic leucine-rich nuclear phosphoprotein 32 family member E (263 aa).

3 LRR repeats span residues 43–64 (ELEFLSMANVELKSLSKLPKLP), 65–84 (KLRKLELSDNSISGGLDVLT), and 89–110 (NITYLNLSGNKIKDLSTVEALA). The region spanning 123–161 (CEITNLEDYRENIFQRLSQITYLDGFDQEDNEAPDSEED) is the LRRCT domain. Residues 146–263 (DGFDQEDNEA…PEDEGDEDED (118 aa)) are disordered. Acidic residues-rich tracts occupy residues 148-172 (FDQEDNEAPDSEEDDDDDDYDDDEE), 180-203 (AEEDEEDEESASDLGEEEEEEEEV), and 214-242 (RDEEDDDDYVEDGAEGEEEEEEDEEDEAA). The ZID domain stretch occupies residues 202-263 (EVGLSYLMKE…PEDEGDEDED (62 aa)).

This sequence belongs to the ANP32 family. Component of a SWR1-like complex. Interacts with H2A.Z/H2AZ1. Post-translationally, phosphorylated. The phosphorylation is nuclear localization signal (NLS)-dependent.

It localises to the cytoplasm. The protein localises to the nucleus. Histone chaperone that specifically mediates the genome-wide removal of histone H2A.Z/H2AZ1 from the nucleosome: removes H2A.Z/H2AZ1 from its normal sites of deposition, especially from enhancer and insulator regions. Not involved in deposition of H2A.Z/H2AZ1 in the nucleosome. May stabilize the evicted H2A.Z/H2AZ1-H2B dimer, thus shifting the equilibrium towards dissociation and the off-chromatin state. Inhibits activity of protein phosphatase 2A (PP2A). Does not inhibit protein phosphatase 1. May play a role in cerebellar development and synaptogenesis. The protein is Acidic leucine-rich nuclear phosphoprotein 32 family member E (anp32e) of Xenopus laevis (African clawed frog).